Consider the following 232-residue polypeptide: Flagellar L-ring protein (232 aa).

The first 21 residues, 1-21 (MQKNAAHTYAISSLLVLSLTG), serve as a signal peptide directing secretion. Cysteine 22 is lipidated: N-palmitoyl cysteine. Cysteine 22 is lipidated: S-diacylglycerol cysteine.

Belongs to the FlgH family. In terms of assembly, the basal body constitutes a major portion of the flagellar organelle and consists of four rings (L,P,S, and M) mounted on a central rod.

It localises to the cell outer membrane. Its subcellular location is the bacterial flagellum basal body. Its function is as follows. Assembles around the rod to form the L-ring and probably protects the motor/basal body from shearing forces during rotation. The sequence is that of Flagellar L-ring protein from Escherichia coli O7:K1 (strain IAI39 / ExPEC).